The following is a 623-amino-acid chain: ATP-dependent lipid A-core flippase (623 aa).

A run of 5 helical transmembrane segments spans residues L66–I86, V103–F123, L190–I210, L290–L310, and A317–I337. An ABC transmembrane type-1 domain is found at V67 to K349. Positions V382–M618 constitute an ABC transporter domain. G416–T423 provides a ligand contact to ATP.

Belongs to the ABC transporter superfamily. Lipid exporter (TC 3.A.1.106) family. Homodimer.

It is found in the cell inner membrane. The catalysed reaction is ATP + H2O + lipid A-core oligosaccharideSide 1 = ADP + phosphate + lipid A-core oligosaccharideSide 2.. Its function is as follows. Involved in lipopolysaccharide (LPS) biosynthesis. Translocates lipid A-core from the inner to the outer leaflet of the inner membrane. Transmembrane domains (TMD) form a pore in the inner membrane and the ATP-binding domain (NBD) is responsible for energy generation. This Bordetella bronchiseptica (strain ATCC BAA-588 / NCTC 13252 / RB50) (Alcaligenes bronchisepticus) protein is ATP-dependent lipid A-core flippase.